We begin with the raw amino-acid sequence, 463 residues long: Cysteine--tRNA ligase (463 aa).

Cys28 provides a ligand contact to Zn(2+). The 'HIGH' region motif lies at 30 to 40; the sequence is ITPYDLCHIGH. Zn(2+) is bound by residues Cys211, His236, and Glu240. The 'KMSKS' region signature appears at 268 to 272; it reads KMSKS. An ATP-binding site is contributed by Lys271.

The protein belongs to the class-I aminoacyl-tRNA synthetase family. In terms of assembly, monomer. Requires Zn(2+) as cofactor.

It is found in the cytoplasm. It carries out the reaction tRNA(Cys) + L-cysteine + ATP = L-cysteinyl-tRNA(Cys) + AMP + diphosphate. This chain is Cysteine--tRNA ligase, found in Wigglesworthia glossinidia brevipalpis.